A 97-amino-acid polypeptide reads, in one-letter code: CLAVATA3/ESR (CLE)-related protein ESR2-C (97 aa).

The disordered stretch occupies residues 1-97 (TRTDDKPGVN…IGPPPFLDRY (97 aa)). 2 positions are modified to hydroxyproline: Pro-47 and Pro-50. Pro-50 is a glycosylation site (O-linked (Ara...) hydroxyproline).

Belongs to the CLV3/ESR signal peptide family. Post-translationally, the O-glycosylation (arabinosylation) of the hydroxyproline Pro-50 enhances binding affinity of the ESR2Cp peptide for its receptor. Seed endosperm.

It localises to the secreted. It is found in the extracellular space. Extracellular signal peptide that regulates cell fate. This chain is CLAVATA3/ESR (CLE)-related protein ESR2-C, found in Zea mays (Maize).